Reading from the N-terminus, the 187-residue chain is Chromophore lyase CpcS/CpeS 2 (187 aa).

Belongs to the CpcS/CpeS biliprotein lyase family.

Its function is as follows. Covalently attaches a chromophore to Cys residue(s) of phycobiliproteins. This Synechococcus sp. (strain JA-3-3Ab) (Cyanobacteria bacterium Yellowstone A-Prime) protein is Chromophore lyase CpcS/CpeS 2.